Here is a 540-residue protein sequence, read N- to C-terminus: Membrane protein insertase YidC (540 aa).

A helical membrane pass occupies residues 6–26 (NILLIALALVSFLLFQQWQVA). The interval 36–63 (QAQSSSTLPAPSFADELDPVPGQQQASA) is disordered. Helical transmembrane passes span 342–362 (AFIQ…TFIV), 417–437 (LGGC…YWAL), 455–475 (LSAQ…MFLI), and 496–516 (PVMF…YWLV).

It belongs to the OXA1/ALB3/YidC family. Type 1 subfamily. As to quaternary structure, interacts with the Sec translocase complex via SecD. Specifically interacts with transmembrane segments of nascent integral membrane proteins during membrane integration.

It is found in the cell inner membrane. In terms of biological role, required for the insertion and/or proper folding and/or complex formation of integral membrane proteins into the membrane. Involved in integration of membrane proteins that insert both dependently and independently of the Sec translocase complex, as well as at least some lipoproteins. Aids folding of multispanning membrane proteins. The chain is Membrane protein insertase YidC from Vibrio campbellii (strain ATCC BAA-1116).